A 90-amino-acid chain; its full sequence is Serine protease inhibitor Cvsi-1 (90 aa).

Residues 1 to 19 form the signal peptide; the sequence is MDVVRTLILCVCLFGLTFA.

Post-translationally, contains 6 disulfide bonds. Detected in hemolymph (at protein level). In oysters collected in the summer the expression level is highest in the digestive gland with low levels of expression in gill, mantle, labial palp, style-sac midgut, gonad, heart, and hemocyte. In winter expression levels are higher in all tissues with highest expression levels observed in the digestive gland. Within the digestive gland expression is limited to the basophil cells of the digestive diverticula.

It is found in the secreted. Functionally, slow-binding inhibitor of serine proteases. The inhibitor rapidly binds to the protease forming a weak enzyme-inhibitor complex, and this is followed by a slow isomerization forming a tight-binding enzyme-inhibitor complex. Active against subtilisin A, perkinsin and trypsin with dissociation constants of 0.29 nM, 13.7 nM and 17.7 nM respectively. Not active against thermolysin, papain or pepsin. Has antiparasitic activity against the protozoan P.marinus. This chain is Serine protease inhibitor Cvsi-1, found in Crassostrea virginica (Eastern oyster).